Consider the following 485-residue polypeptide: Aspartyl/glutamyl-tRNA(Asn/Gln) amidotransferase subunit B (485 aa).

The protein belongs to the GatB/GatE family. GatB subfamily. As to quaternary structure, heterotrimer of A, B and C subunits.

The catalysed reaction is L-glutamyl-tRNA(Gln) + L-glutamine + ATP + H2O = L-glutaminyl-tRNA(Gln) + L-glutamate + ADP + phosphate + H(+). It carries out the reaction L-aspartyl-tRNA(Asn) + L-glutamine + ATP + H2O = L-asparaginyl-tRNA(Asn) + L-glutamate + ADP + phosphate + 2 H(+). In terms of biological role, allows the formation of correctly charged Asn-tRNA(Asn) or Gln-tRNA(Gln) through the transamidation of misacylated Asp-tRNA(Asn) or Glu-tRNA(Gln) in organisms which lack either or both of asparaginyl-tRNA or glutaminyl-tRNA synthetases. The reaction takes place in the presence of glutamine and ATP through an activated phospho-Asp-tRNA(Asn) or phospho-Glu-tRNA(Gln). The chain is Aspartyl/glutamyl-tRNA(Asn/Gln) amidotransferase subunit B from Cupriavidus taiwanensis (strain DSM 17343 / BCRC 17206 / CCUG 44338 / CIP 107171 / LMG 19424 / R1) (Ralstonia taiwanensis (strain LMG 19424)).